Consider the following 502-residue polypeptide: Sodium/proline symporter (502 aa).

At 1–5 (MAIST) the chain is on the periplasmic side. The chain crosses the membrane as a helical span at residues 6–26 (PMLVTFCVYIFGMILIGFIAW). Topologically, residues 27–41 (RSTKNFDDYILGGRS) are cytoplasmic. Hydrophilic stretches follow at residues 27–66 (RSTK…GLPG) and 88–124 (INWK…KSRI). The chain crosses the membrane as a helical span at residues 42–62 (LGPFVTALSAGASDMSGWLLM). The Periplasmic segment spans residues 63-67 (GLPGA). A helical membrane pass occupies residues 68 to 88 (VFLSGISESWIAIGLTLGAWI). The Cytoplasmic segment spans residues 89 to 126 (NWKLVAGRLRVHTEYNNNALTLPDYFTGRFEDKSRILR). A helical transmembrane segment spans residues 127-147 (IISALVILLFFTIYCASGIVA). The Periplasmic portion of the chain corresponds to 148 to 162 (GARLFESTFGMSYET). Residues 151-162 (LFESTFGMSYET) are hydrophilic. Residues 163–183 (ALWAGAAATILYTFIGGFLAV) traverse the membrane as a helical segment. The Cytoplasmic portion of the chain corresponds to 184 to 192 (SWTDTVQAS). Positions 185-189 (WTDTV) are hydrophilic. The helical transmembrane segment at 193–213 (LMIFALILTPVIVIISVGGFG) threads the bilayer. 3 hydrophilic regions span residues 214–231 (DSLE…DMLK), 249–274 (FGQP…RRIS), and 296–319 (FNDH…ELAQ). At 214–234 (DSLEVIKQKSIENVDMLKGLN) the chain is on the periplasmic side. The chain crosses the membrane as a helical span at residues 235–255 (FVAIISLMGWGLGYFGQPHIL). Residues 256–275 (ARFMAADSHHSIVHARRISM) lie on the Cytoplasmic side of the membrane. The helical transmembrane segment at 276–296 (TWMILCLAGAVAVGFFGIAYF) threads the bilayer. Residues 297-319 (NDHPALAGAVNQNAERVFIELAQ) are Periplasmic-facing. A helical membrane pass occupies residues 320–340 (ILFNPWIAGILLSAILAAVMS). The Cytoplasmic portion of the chain corresponds to 341–370 (TLSCQLLVCSSAITEDLYKAFLRKHASQKE). Residues 341-370 (TLSCQLLVCSSAITEDLYKAFLRKHASQKE) are hydrophilic. Residues 371-391 (LVWVGRVMVLVVALVAIALAA) form a helical membrane-spanning segment. Over 392-397 (NPENRV) the chain is Periplasmic. Residues 392–397 (NPENRV) form a hydrophilic region. Residues 398–418 (LGLVSYAWAGFGAAFGPVVLF) traverse the membrane as a helical segment. The Cytoplasmic portion of the chain corresponds to 419 to 427 (SVMWSRMTR). Hydrophilic stretches follow at residues 424 to 430 (RMTRNGA) and 446 to 448 (QFG). A run of 2 helical transmembrane segments spans residues 428 to 448 (NGAL…KQFG) and 449 to 469 (WLGL…IVVF). The Cytoplasmic segment spans residues 470 to 502 (SLLGKAPSAAMQKRFAEADAHYHSAPPSRLQES). The hydrophilic stretch occupies residues 476 to 502 (PSAAMQKRFAEADAHYHSAPPSRLQES).

This sequence belongs to the sodium:solute symporter (SSF) (TC 2.A.21) family. In terms of assembly, has been isolated from inner membrane preparations as a homodimer.

The protein resides in the cell inner membrane. It catalyses the reaction L-proline(in) + Na(+)(in) = L-proline(out) + Na(+)(out). With respect to regulation, activity is stimulated by phosphatidylethanolamine and phosphatidylglycerol, but not by phosphatidylcholine and cardiolipin. Proline uptake is inhibited by the sulfhydryl reagent N-ethylmaleimide (NEM). Proline, in the presence of Na(+) or Li(+), protects the carrier functions from NEM-inactivation. Functionally, catalyzes the sodium-dependent uptake of extracellular L-proline. This protein is also capable of using lithium as the transport cation. Also catalyzes the uptake of propionate. The sequence is that of Sodium/proline symporter (putP) from Escherichia coli (strain K12).